The chain runs to 201 residues: Small ribosomal subunit protein uS4c (201 aa).

The disordered stretch occupies residues Leu15 to Gln43. Positions Met89–Asn150 constitute an S4 RNA-binding domain.

This sequence belongs to the universal ribosomal protein uS4 family. As to quaternary structure, part of the 30S ribosomal subunit. Contacts protein S5. The interaction surface between S4 and S5 is involved in control of translational fidelity.

It is found in the plastid. The protein localises to the chloroplast. Functionally, one of the primary rRNA binding proteins, it binds directly to 16S rRNA where it nucleates assembly of the body of the 30S subunit. Its function is as follows. With S5 and S12 plays an important role in translational accuracy. This is Small ribosomal subunit protein uS4c (rps4) from Drimys granadensis.